The following is a 427-amino-acid chain: Adenylosuccinate synthetase (427 aa).

GTP-binding positions include 12-18 (GDEGKGK) and 40-42 (GHT). Residue Asp13 is the Proton acceptor of the active site. Residues Asp13 and Gly40 each coordinate Mg(2+). IMP is bound by residues 13-16 (DEGK), 38-41 (NAGH), Thr128, Arg142, Gln223, Thr238, and Arg302. His41 functions as the Proton donor in the catalytic mechanism. 298-304 (TTTGRPR) contacts substrate. GTP contacts are provided by residues Arg304, 330-332 (SID), and 412-414 (SVG).

It belongs to the adenylosuccinate synthetase family. As to quaternary structure, homodimer. Requires Mg(2+) as cofactor.

Its subcellular location is the cytoplasm. It carries out the reaction IMP + L-aspartate + GTP = N(6)-(1,2-dicarboxyethyl)-AMP + GDP + phosphate + 2 H(+). Its pathway is purine metabolism; AMP biosynthesis via de novo pathway; AMP from IMP: step 1/2. Plays an important role in the de novo pathway of purine nucleotide biosynthesis. Catalyzes the first committed step in the biosynthesis of AMP from IMP. This chain is Adenylosuccinate synthetase, found in Staphylococcus aureus (strain MW2).